The chain runs to 236 residues: MATTHLDVCAVVPAAGFGRRMQTECPKQYLSIGNQTILEHSVHALLAHPRVKRVVIAISPGDSRFAQLPLANHPQITVVDGGEERADSVLAGLKAAGDAQWVLVHDAARPCLHQDDLARLLALSETSRTGGILAAPVRDTMKRAETGKNAIAHTVDRNGLWHALTPQFFPRELLHDCLTRALNEGATITDEASALEYCGFHPQLVEGRADNIKVTRPEDLALAEFYLTRTIHQENT.

It belongs to the IspD/TarI cytidylyltransferase family. IspD subfamily. In terms of assembly, homodimer.

The enzyme catalyses 2-C-methyl-D-erythritol 4-phosphate + CTP + H(+) = 4-CDP-2-C-methyl-D-erythritol + diphosphate. It functions in the pathway isoprenoid biosynthesis; isopentenyl diphosphate biosynthesis via DXP pathway; isopentenyl diphosphate from 1-deoxy-D-xylulose 5-phosphate: step 2/6. In terms of biological role, catalyzes the formation of 4-diphosphocytidyl-2-C-methyl-D-erythritol from CTP and 2-C-methyl-D-erythritol 4-phosphate (MEP). The chain is 2-C-methyl-D-erythritol 4-phosphate cytidylyltransferase from Escherichia coli O127:H6 (strain E2348/69 / EPEC).